The chain runs to 455 residues: MFS-type transporter SLC18B1 (455 aa).

An N-acetylmethionine modification is found at Met1. The disordered stretch occupies residues 1–26 (MDTAGPPAPAGTEGDGPGGSTGETSR). The Cytoplasmic portion of the chain corresponds to 1 to 32 (MDTAGPPAPAGTEGDGPGGSTGETSRRLSKEQ). Ser20 is subject to Phosphoserine. The chain crosses the membrane as a helical span at residues 33 to 53 (IFVLVSAASMNLGCMMTYSIL). Topologically, residues 54–69 (GPFFPKEAEKKGASNT) are extracellular. A helical transmembrane segment spans residues 70-90 (TIGMIFGCYALFELLASLVFG). Residues 91 to 99 (KYLVHIGAK) are Cytoplasmic-facing. A helical transmembrane segment spans residues 100 to 120 (FMFIAGMFVSGGVTILFGVLD). Topologically, residues 121 to 126 (QLPEGP) are extracellular. Residues 127–147 (IFIAMCFLVRIVDAIGFGAAI) form a helical membrane-spanning segment. At 148–166 (TASSSILAKAFPNNVATVM) the chain is on the cytoplasmic side. The helical transmembrane segment at 167-187 (GSLEVFSGLGLVAGPPLGGLL) threads the bilayer. At 188–194 (YQSFGYE) the chain is on the extracellular side. The chain crosses the membrane as a helical span at residues 195–215 (VPFIFLGCIVLLMIPLNLCIL). Residues 216-232 (PSYESDAGKQSFWKLVT) are Cytoplasmic-facing. A helical membrane pass occupies residues 233 to 253 (LPKIGLIAFVIISLSSCFGFL). Over 254 to 271 (DPTLSLFVMKKFSLSTGY) the chain is Extracellular. Residues 272-292 (VGLVFLGLSLSYAISSPLFGL) traverse the membrane as a helical segment. Over 293 to 303 (LSDKMPNLRKW) the chain is Cytoplasmic. Residues 304-324 (FLVFGNLITAGCYMLLGPIPL) form a helical membrane-spanning segment. The Extracellular segment spans residues 325–330 (LHIKSQ). A helical transmembrane segment spans residues 331–351 (LWLLVLVLVINGVSAGMSIIP). Over 352–376 (TFPEMLSCAYANGFEDGISTLGLVS) the chain is Cytoplasmic. A helical membrane pass occupies residues 377–397 (GLFGAMWSVGAFMGPILGGFL). Residues 398–406 (CEKIGFEWA) lie on the Extracellular side of the membrane. A helical membrane pass occupies residues 407–427 (AAIQGLWTLLSGVAMALFYLW). The Cytoplasmic segment spans residues 428–455 (EDSTMRRSKAQNILGTEEEQAALLPNDT).

Expressed in brain structures, particularly in hippocampus, cortex, and cerebellum (at protein level). Expressed in astrocytes and hippocampal neurons (at protein level). Expressed in peritoneal mast cells.

It is found in the cytoplasmic vesicle. It localises to the secretory vesicle membrane. The protein resides in the secretory vesicle. Its subcellular location is the synaptic vesicle membrane. The enzyme catalyses spermine(in) + n H(+)(out) = spermine(out) + n H(+)(in). The catalysed reaction is spermidine(in) + n H(+)(out) = spermidine(out) + n H(+)(in). It catalyses the reaction serotonin(in) + n H(+)(out) = serotonin(out) + n H(+)(in). Proton-coupled polyamine antiporter involved in the translocation of polyamines from cytosol into secretory vesicles prior to their release via exocytosis. Uses the electrochemical proton gradient generated by a V-type proton-pumping ATPase to couple the efflux of protons with the uptake of a polyamine molecule. Facilitates vesicular storage of spermine and spermidine in astrocytes with an impact on glutamatergic neuronal transmission and memory formation. Upon antigen stimulation, regulates polyamine accumulation and release in mast cell secretory granules, which in turn potentiates mast cell degranulation and histamine secretion. This chain is MFS-type transporter SLC18B1, found in Rattus norvegicus (Rat).